A 652-amino-acid polypeptide reads, in one-letter code: MYLSRQLRLLPRANIACSLSSSGAHYTTAAPAEDAPIEIPNRIERSPTDLLQALASTVARDYTAPHYKYHDDPFLIPMSNAAKRTYAMSKESGRKAAKWIKEEHRELFMHQEAQPAIEKFAPSMVYTEDSVVDETSLAQLISQGELKDAVLVYNLLEQKGNPISPELKQSLLELVCFHNNQEPIPEEYIEERWFLQNNKRRERSGKTWKDGDLAEKLYSEIEPKTPQSYASLIRGMAKYLQCERAYALLQEAGEKQVQLDTNTFNSVIEIVSFLKDTAEQRWQLCKDLLNEMSQQKLRPNLGTLNAVLQCISTFGNFKVARAAALQALPEFKQLGVNPSLGSYYYLLIIFCRERGPVSHVIVDILNDISGKEFQIQHPKDTYFFATAMDVCRNHLHDKSLAKKVDELLHTGKNYDLVGDSFKESIYYRNYLALLCQTESTEDFMLSYDLLVPNIYIPEPGIMEEILRAIEINGAVEYVPRLWSDMVVFDHTHRESLLLYVLRILVDNKPNPDSPAQAQLPEQGAKVALDMFERVEEAIKRLRKVSFTGQMLGDILTLLVRGGSYEKATEVFAHIDKNQHRIPGTPSLNALIEFVDASVQEKSPSQALFALQYAVENNFDSRELAKRIHEGFTLNETHLSKLKSLVGESFLDK.

The transit peptide at 1–37 directs the protein to the mitochondrion; that stretch reads MYLSRQLRLLPRANIACSLSSSGAHYTTAAPAEDAPI. PPR repeat units follow at residues 129-163, 225-259, 260-299, 300-338, and 547-581; these read DSVV…GNPI, TPQS…QVQL, DTNT…KLRP, NLGT…GVNP, and TGQM…QHRI.

It belongs to the mitochondrion-specific ribosomal protein mS39 family.

Its subcellular location is the mitochondrion. Functionally, mitochondrial protein that may have a role in mitochondrial translation. Essential for larval development. This Drosophila melanogaster (Fruit fly) protein is Small ribosomal subunit protein mS39.